A 517-amino-acid polypeptide reads, in one-letter code: Fluconazole resistance protein 1 (517 aa).

The zn(2)-C6 fungal-type DNA-binding region spans 26–52; that stretch reads CDSCRIKKTKCDGKKPCNRCTLDNKIC. 4 disordered regions span residues 106-137, 250-270, 284-307, and 378-403; these read KSVDQEKSSPASSTPNSSSSDHHDDVEEQNST, SAQFSKGTFSPQQQQLQQQQQ, SDIESDSSNKEDGLNSGSVSPPTS, and GSIQLQQKPRGSVHKPVRNHSRVSSF. Over residues 113–124 the composition is skewed to low complexity; it reads SSPASSTPNSSS. Residues 250–260 show a composition bias toward polar residues; sequence SAQFSKGTFSP. Residues 261–270 are compositionally biased toward low complexity; it reads QQQQLQQQQQ. Positions 298–307 are enriched in polar residues; that stretch reads NSGSVSPPTS. Basic residues predominate over residues 388 to 398; the sequence is GSVHKPVRNHS.

Its subcellular location is the nucleus. Its function is as follows. Transcription factor that acts as a negative regulator of fluconazole resistance in C.albicans. Also confers fluconazole resistance in S.cerevisiae by activation of the PDR5 gene. This Candida albicans (Yeast) protein is Fluconazole resistance protein 1 (FCR1).